The following is a 619-amino-acid chain: Long-chain fatty acid transport protein 6 (619 aa).

A run of 2 helical transmembrane segments spans residues 22 to 42 (LLFP…LIII) and 119 to 139 (VHVW…NTNI). 221 to 232 (YIFTSGTTGLPK) is an AMP binding site.

It belongs to the ATP-dependent AMP-binding enzyme family. Strongly expressed in heart and localizes to cardiac myocytes. Expressed at moderate levels in placenta, testis, and adrenal glands. Expressed at very low levels in kidney, bladder and uterus.

The protein resides in the cell membrane. It is found in the sarcolemma. It carries out the reaction a fatty acid(in) = a fatty acid(out). The enzyme catalyses hexadecanoate(out) = hexadecanoate(in). The catalysed reaction is (9Z)-octadecenoate(out) = (9Z)-octadecenoate(in). It catalyses the reaction (9Z,12Z)-octadecadienoate(out) = (9Z,12Z)-octadecadienoate(in). It carries out the reaction a very long-chain fatty acid + ATP + CoA = a very long-chain fatty acyl-CoA + AMP + diphosphate. The enzyme catalyses tetracosanoate + ATP + CoA = tetracosanoyl-CoA + AMP + diphosphate. The catalysed reaction is a long-chain fatty acid + ATP + CoA = a long-chain fatty acyl-CoA + AMP + diphosphate. It catalyses the reaction (5Z,8Z,11Z,14Z)-eicosatetraenoate + ATP + CoA = (5Z,8Z,11Z,14Z)-eicosatetraenoyl-CoA + AMP + diphosphate. It carries out the reaction (9Z)-octadecenoate + ATP + CoA = (9Z)-octadecenoyl-CoA + AMP + diphosphate. Functionally, mediates the import of long-chain fatty acids (LCFA) into the cell by facilitating their transport at the plasma membrane. Also functions as an acyl-CoA ligase catalyzing the ATP-dependent formation of fatty acyl-CoA using LCFA and very-long-chain fatty acids (VLCFA) as substrates. Plays a pivotal role in regulating available LCFA substrates from exogenous sources in tissues undergoing high levels of beta-oxidation such as the heart. The protein is Long-chain fatty acid transport protein 6 (SLC27A6) of Homo sapiens (Human).